Here is a 211-residue protein sequence, read N- to C-terminus: Thiamine-phosphate synthase (211 aa).

Residues 38-42 (QLREK) and N70 contribute to the 4-amino-2-methyl-5-(diphosphooxymethyl)pyrimidine site. Mg(2+) is bound by residues D71 and D90. S109 provides a ligand contact to 4-amino-2-methyl-5-(diphosphooxymethyl)pyrimidine. 135–137 (TST) is a binding site for 2-[(2R,5Z)-2-carboxy-4-methylthiazol-5(2H)-ylidene]ethyl phosphate. Residue K138 participates in 4-amino-2-methyl-5-(diphosphooxymethyl)pyrimidine binding. 2-[(2R,5Z)-2-carboxy-4-methylthiazol-5(2H)-ylidene]ethyl phosphate is bound by residues G165 and 185 to 186 (IS).

It belongs to the thiamine-phosphate synthase family. Mg(2+) is required as a cofactor.

It carries out the reaction 2-[(2R,5Z)-2-carboxy-4-methylthiazol-5(2H)-ylidene]ethyl phosphate + 4-amino-2-methyl-5-(diphosphooxymethyl)pyrimidine + 2 H(+) = thiamine phosphate + CO2 + diphosphate. The catalysed reaction is 2-(2-carboxy-4-methylthiazol-5-yl)ethyl phosphate + 4-amino-2-methyl-5-(diphosphooxymethyl)pyrimidine + 2 H(+) = thiamine phosphate + CO2 + diphosphate. It catalyses the reaction 4-methyl-5-(2-phosphooxyethyl)-thiazole + 4-amino-2-methyl-5-(diphosphooxymethyl)pyrimidine + H(+) = thiamine phosphate + diphosphate. Its pathway is cofactor biosynthesis; thiamine diphosphate biosynthesis; thiamine phosphate from 4-amino-2-methyl-5-diphosphomethylpyrimidine and 4-methyl-5-(2-phosphoethyl)-thiazole: step 1/1. Functionally, condenses 4-methyl-5-(beta-hydroxyethyl)thiazole monophosphate (THZ-P) and 2-methyl-4-amino-5-hydroxymethyl pyrimidine pyrophosphate (HMP-PP) to form thiamine monophosphate (TMP). The protein is Thiamine-phosphate synthase of Clostridium acetobutylicum (strain ATCC 824 / DSM 792 / JCM 1419 / IAM 19013 / LMG 5710 / NBRC 13948 / NRRL B-527 / VKM B-1787 / 2291 / W).